Reading from the N-terminus, the 288-residue chain is 4-diphosphocytidyl-2-C-methyl-D-erythritol kinase (288 aa).

Residue lysine 8 is part of the active site. 90 to 100 (PLEAGLAGGSA) provides a ligand contact to ATP. Aspartate 132 is a catalytic residue.

The protein belongs to the GHMP kinase family. IspE subfamily.

The enzyme catalyses 4-CDP-2-C-methyl-D-erythritol + ATP = 4-CDP-2-C-methyl-D-erythritol 2-phosphate + ADP + H(+). It functions in the pathway isoprenoid biosynthesis; isopentenyl diphosphate biosynthesis via DXP pathway; isopentenyl diphosphate from 1-deoxy-D-xylulose 5-phosphate: step 3/6. Functionally, catalyzes the phosphorylation of the position 2 hydroxy group of 4-diphosphocytidyl-2C-methyl-D-erythritol. The protein is 4-diphosphocytidyl-2-C-methyl-D-erythritol kinase of Carboxydothermus hydrogenoformans (strain ATCC BAA-161 / DSM 6008 / Z-2901).